We begin with the raw amino-acid sequence, 199 residues long: Tegument protein UL14 homolog (199 aa).

Residues 176–191 (TDMNQMQPQPISKNEN) show a composition bias toward polar residues. Residues 176-199 (TDMNQMQPQPISKNENPPTPHTDV) form a disordered region.

It belongs to the alphaherpesvirinae HHV-1 UL14 protein family.

It localises to the virion tegument. The protein resides in the host cytoplasm. It is found in the host nucleus. Contributes to the nuclear transport of the viral transcriptional activator VP16 homolog during the early phase of infection. Therefore, participates indirectly in the regulation of the immediate-early gene expression. Additionally, seems to be important for efficient nuclear targeting of capsids. This Varicella-zoster virus (strain Dumas) (HHV-3) protein is Tegument protein UL14 homolog.